The sequence spans 240 residues: MSGFIKSTLLGLGQDYLEDQYQEFAEQHFQPTRDPFYETNKDGKKHRRRLPYYCTKDESKAWKKVQNKAWLHDKSLCGCCCWTNTIGWAPLLALLPVIGPLLMYWVHDKLIELADDRYKLPAEIKVKMHGNIVIDLLISLVPILGSVFAWLHACSTRNAAIVYNFVGKRALERKQAELMHQKEENEKHSNANTAPPVVGGNKNVNGNRNNSKMYNRPPVTAPPAPAYTRSTNGRPQRGYR.

Topologically, residues 1–85 (MSGFIKSTLL…LCGCCCWTNT (85 aa)) are cytoplasmic. A helical transmembrane segment spans residues 86-106 (IGWAPLLALLPVIGPLLMYWV). The Extracellular portion of the chain corresponds to 107–131 (HDKLIELADDRYKLPAEIKVKMHGN). Residues 132 to 152 (IVIDLLISLVPILGSVFAWLH) traverse the membrane as a helical segment. Residues 153-240 (ACSTRNAAIV…TNGRPQRGYR (88 aa)) are Cytoplasmic-facing. Residues 181–240 (QKEENEKHSNANTAPPVVGGNKNVNGNRNNSKMYNRPPVTAPPAPAYTRSTNGRPQRGYR) form a disordered region. Residues 197 to 210 (VVGGNKNVNGNRNN) are compositionally biased toward low complexity.

It is found in the membrane. This is an uncharacterized protein from Saccharomyces cerevisiae (strain ATCC 204508 / S288c) (Baker's yeast).